The following is a 234-amino-acid chain: UPF0502 protein BPSS1373 (234 aa).

It belongs to the UPF0502 family.

This is UPF0502 protein BPSS1373 from Burkholderia pseudomallei (strain K96243).